Consider the following 374-residue polypeptide: F-box/kelch-repeat protein At2g24250 (374 aa).

One can recognise an F-box domain in the interval 14–63 (PDWSQLPEELLHIISTHLEDHYFDAVHARSVCRSWRSTFPFPSSLLRQSY). Kelch repeat units lie at residues 100-150 (SEYF…PLGH) and 249-301 (NFLV…LGNF).

The polypeptide is F-box/kelch-repeat protein At2g24250 (Arabidopsis thaliana (Mouse-ear cress)).